Consider the following 356-residue polypeptide: Histidinol-phosphate aminotransferase (356 aa).

Lys-217 carries the N6-(pyridoxal phosphate)lysine modification.

This sequence belongs to the class-II pyridoxal-phosphate-dependent aminotransferase family. Histidinol-phosphate aminotransferase subfamily. Homodimer. Requires pyridoxal 5'-phosphate as cofactor.

The enzyme catalyses L-histidinol phosphate + 2-oxoglutarate = 3-(imidazol-4-yl)-2-oxopropyl phosphate + L-glutamate. Its pathway is amino-acid biosynthesis; L-histidine biosynthesis; L-histidine from 5-phospho-alpha-D-ribose 1-diphosphate: step 7/9. The chain is Histidinol-phosphate aminotransferase from Chromobacterium violaceum (strain ATCC 12472 / DSM 30191 / JCM 1249 / CCUG 213 / NBRC 12614 / NCIMB 9131 / NCTC 9757 / MK).